The chain runs to 201 residues: Peptidyl-tRNA hydrolase (201 aa).

Tyr14 contacts tRNA. The active-site Proton acceptor is the His19. The tRNA site is built by Tyr64, Asn66, and Asn112.

It belongs to the PTH family. As to quaternary structure, monomer.

Its subcellular location is the cytoplasm. The catalysed reaction is an N-acyl-L-alpha-aminoacyl-tRNA + H2O = an N-acyl-L-amino acid + a tRNA + H(+). Hydrolyzes ribosome-free peptidyl-tRNAs (with 1 or more amino acids incorporated), which drop off the ribosome during protein synthesis, or as a result of ribosome stalling. Functionally, catalyzes the release of premature peptidyl moieties from peptidyl-tRNA molecules trapped in stalled 50S ribosomal subunits, and thus maintains levels of free tRNAs and 50S ribosomes. In Bradyrhizobium sp. (strain ORS 278), this protein is Peptidyl-tRNA hydrolase.